Consider the following 366-residue polypeptide: tRNA/tmRNA (uracil-C(5))-methyltransferase (366 aa).

Residues Q190, Y218, N223, E239, and D299 each contribute to the S-adenosyl-L-methionine site. C324 acts as the Nucleophile in catalysis. The active-site Proton acceptor is the E358.

Belongs to the class I-like SAM-binding methyltransferase superfamily. RNA M5U methyltransferase family. TrmA subfamily.

It carries out the reaction uridine(54) in tRNA + S-adenosyl-L-methionine = 5-methyluridine(54) in tRNA + S-adenosyl-L-homocysteine + H(+). The catalysed reaction is uridine(341) in tmRNA + S-adenosyl-L-methionine = 5-methyluridine(341) in tmRNA + S-adenosyl-L-homocysteine + H(+). Dual-specificity methyltransferase that catalyzes the formation of 5-methyluridine at position 54 (m5U54) in all tRNAs, and that of position 341 (m5U341) in tmRNA (transfer-mRNA). This chain is tRNA/tmRNA (uracil-C(5))-methyltransferase, found in Escherichia fergusonii (strain ATCC 35469 / DSM 13698 / CCUG 18766 / IAM 14443 / JCM 21226 / LMG 7866 / NBRC 102419 / NCTC 12128 / CDC 0568-73).